A 347-amino-acid polypeptide reads, in one-letter code: 3-keto-steroid reductase ERG27 (347 aa).

Residues L15, T38, and R44 each coordinate NADP(+). Catalysis depends on proton donor residues S179 and Y202. NADP(+)-binding residues include Y202, K206, and S237. K206 serves as the catalytic Lowers pKa of active site Tyr. T345 bears the Phosphothreonine mark.

The protein belongs to the short-chain dehydrogenases/reductases (SDR) family. ERG27 subfamily. In terms of assembly, heterotetramer of ERG25, ERG26, ERG27 and ERG28. ERG28 acts as a scaffold to tether ERG27 and other 4,4-demethylation-related enzymes, forming a demethylation enzyme complex, in the endoplasmic reticulum. Interacts with ERG25 and ERG28. Also interacts with ERG7, but only in lipid particles.

The protein localises to the endoplasmic reticulum membrane. It localises to the lipid droplet. It carries out the reaction 3-dehydro-4alpha-methylzymosterol + NADPH + H(+) = 4alpha-methylzymosterol + NADP(+). The protein operates within steroid biosynthesis; zymosterol biosynthesis; zymosterol from lanosterol: step 5/6. In terms of biological role, 3-keto-steroid reductase; part of the third module of ergosterol biosynthesis pathway that includes the late steps of the pathway. ERG27 is a catalytic component of the C-4 demethylation complex that catalyze the reduction of the keto group on the C-3. The third module or late pathway involves the ergosterol synthesis itself through consecutive reactions that mainly occur in the endoplasmic reticulum (ER) membrane. Firstly, the squalene synthase ERG9 catalyzes the condensation of 2 farnesyl pyrophosphate moieties to form squalene, which is the precursor of all steroids. Squalene synthase is crucial for balancing the incorporation of farnesyl diphosphate (FPP) into sterol and nonsterol isoprene synthesis. Secondly, the squalene epoxidase ERG1 catalyzes the stereospecific oxidation of squalene to (S)-2,3-epoxysqualene, which is considered to be a rate-limiting enzyme in steroid biosynthesis. Then, the lanosterol synthase ERG7 catalyzes the cyclization of (S)-2,3 oxidosqualene to lanosterol, a reaction that forms the sterol core. In the next steps, lanosterol is transformed to zymosterol through a complex process involving various demethylation, reduction and desaturation reactions. The lanosterol 14-alpha-demethylase ERG11 (also known as CYP51) catalyzes C14-demethylation of lanosterol to produce 4,4'-dimethyl cholesta-8,14,24-triene-3-beta-ol, which is critical for ergosterol biosynthesis. The C-14 reductase ERG24 reduces the C14=C15 double bond of 4,4-dimethyl-cholesta-8,14,24-trienol to produce 4,4-dimethyl-cholesta-8,24-dienol. 4,4-dimethyl-cholesta-8,24-dienol is substrate of the C-4 demethylation complex ERG25-ERG26-ERG27 in which ERG25 catalyzes the three-step monooxygenation required for the demethylation of 4,4-dimethyl and 4alpha-methylsterols, ERG26 catalyzes the oxidative decarboxylation that results in a reduction of the 3-beta-hydroxy group at the C-3 carbon to an oxo group, and ERG27 is responsible for the reduction of the keto group on the C-3. ERG28 has a role as a scaffold to help anchor ERG25, ERG26 and ERG27 to the endoplasmic reticulum and ERG29 regulates the activity of the iron-containing C4-methylsterol oxidase ERG25. Then, the sterol 24-C-methyltransferase ERG6 catalyzes the methyl transfer from S-adenosyl-methionine to the C-24 of zymosterol to form fecosterol. The C-8 sterol isomerase ERG2 catalyzes the reaction which results in unsaturation at C-7 in the B ring of sterols and thus converts fecosterol to episterol. The sterol-C5-desaturase ERG3 then catalyzes the introduction of a C-5 double bond in the B ring to produce 5-dehydroepisterol. The C-22 sterol desaturase ERG5 further converts 5-dehydroepisterol into ergosta-5,7,22,24(28)-tetraen-3beta-ol by forming the C-22(23) double bond in the sterol side chain. Finally, ergosta-5,7,22,24(28)-tetraen-3beta-ol is substrate of the C-24(28) sterol reductase ERG4 to produce ergosterol. Facilitates the association of ERG7 with lipid particles preventing its digestion in the endoplasmic reticulum and the lipid particles. The protein is 3-keto-steroid reductase ERG27 of Saccharomyces cerevisiae (strain ATCC 204508 / S288c) (Baker's yeast).